Reading from the N-terminus, the 221-residue chain is Translation initiation factor 6 (221 aa).

This sequence belongs to the eIF-6 family.

Functionally, binds to the 50S ribosomal subunit and prevents its association with the 30S ribosomal subunit to form the 70S initiation complex. In Cenarchaeum symbiosum (strain A), this protein is Translation initiation factor 6.